Here is a 100-residue protein sequence, read N- to C-terminus: Small ribosomal subunit protein uS17 (100 aa).

This sequence belongs to the universal ribosomal protein uS17 family. In terms of assembly, part of the 30S ribosomal subunit.

Functionally, one of the primary rRNA binding proteins, it binds specifically to the 5'-end of 16S ribosomal RNA. In Fervidobacterium nodosum (strain ATCC 35602 / DSM 5306 / Rt17-B1), this protein is Small ribosomal subunit protein uS17.